The sequence spans 47 residues: Potassium channel toxin gamma-KTx 5.1 (47 aa).

Intrachain disulfides connect cysteine 5-cysteine 23, cysteine 11-cysteine 34, cysteine 20-cysteine 39, and cysteine 24-cysteine 41.

It belongs to the ergtoxin family. Gamma-KTx 5 subfamily. In terms of tissue distribution, expressed by the venom gland.

The protein resides in the secreted. Its function is as follows. Reversibly blocks Kv11/ERG potassium channels. This Centruroides sculpturatus (Arizona bark scorpion) protein is Potassium channel toxin gamma-KTx 5.1.